We begin with the raw amino-acid sequence, 111 residues long: SRA stem-loop-interacting RNA-binding protein, mitochondrial (111 aa).

Residues 19 to 96 form the RRM domain; sequence PVAFVRKIPW…VKLHVQPQRP (78 aa). The tract at residues 92 to 111 is disordered; the sequence is QPQRPKALQGDQTSDEEKDF. Thr-104 is modified (phosphothreonine). Phosphoserine is present on Ser-105.

The protein resides in the mitochondrion. It localises to the nucleus. RNA-binding protein that acts as a nuclear receptor corepressor. Probably acts by binding the SRA RNA, and repressing the SRA-mediated nuclear receptor coactivation. Binds the STR7 loop of SRA RNA. Also able to repress glucocorticoid (GR), androgen (AR), thyroid (TR) and VDR-mediated transactivation. The protein is SRA stem-loop-interacting RNA-binding protein, mitochondrial (SLIRP) of Bos taurus (Bovine).